A 320-amino-acid polypeptide reads, in one-letter code: MTETTSKRTVLVTGGSGLVGKGIEKYVKETDKSNDVWVFMRSSDCDLKSRESTRSYFEKIKPTHVIHLAARVGGLFSNMKYKVEFFRENIDINDNVLACCKEFNVVKCVSCLSTCIFPDKTTYPIDETMIHNGPPHPSNEGYAYAKRMIDVLNRAYNEEYGCKFTSVIPTNIYGPHDNYHLTDGHVIPGLIHKTYLAMKNNQDLTIMGTGKPLRQFIYSYDLAKYFVWTLNNYEEMSPLILSVGEEDEISIADVARLITEAMEFKGKLIFDTSKADGQYKKTASNLKLKSLVPDLTFTPIQQAIKESCQWFIDNYETARK.

Position 14–20 (14–20) interacts with NADP(+); it reads GGSGLVG. Tyrosine 142 serves as the catalytic Proton donor/acceptor. NADP(+)-binding positions include lysine 146, 169 to 172, and histidine 185; that span reads PTNI. Positions 193, 214, and 276 each coordinate substrate.

This sequence belongs to the NAD(P)-dependent epimerase/dehydratase family. Fucose synthase subfamily.

It catalyses the reaction GDP-beta-L-fucose + NADP(+) = GDP-4-dehydro-alpha-D-rhamnose + NADPH + H(+). The protein operates within nucleotide-sugar biosynthesis; GDP-L-fucose biosynthesis via de novo pathway; GDP-L-fucose from GDP-alpha-D-mannose: step 2/2. Its function is as follows. Catalyzes the two-step NADP-dependent conversion of GDP-4-dehydro-6-deoxy-D-mannose to GDP-fucose, involving an epimerase and a reductase reaction. In Dictyostelium discoideum (Social amoeba), this protein is GDP-L-fucose synthase (ger).